The primary structure comprises 445 residues: Tubulin beta-5 chain (445 aa).

GTP is bound by residues glutamine 11, glutamate 69, serine 138, glycine 142, threonine 143, glycine 144, asparagine 204, and asparagine 226. Glutamate 69 contacts Mg(2+). The segment at 420 to 445 (AEYQQYQDATADDEYEEGEEEEEEAA) is disordered. Residues 429–445 (TADDEYEEGEEEEEEAA) are compositionally biased toward acidic residues.

This sequence belongs to the tubulin family. As to quaternary structure, dimer of alpha and beta chains. A typical microtubule is a hollow water-filled tube with an outer diameter of 25 nm and an inner diameter of 15 nM. Alpha-beta heterodimers associate head-to-tail to form protofilaments running lengthwise along the microtubule wall with the beta-tubulin subunit facing the microtubule plus end conferring a structural polarity. Microtubules usually have 13 protofilaments but different protofilament numbers can be found in some organisms and specialized cells. Mg(2+) is required as a cofactor.

Its subcellular location is the cytoplasm. The protein localises to the cytoskeleton. Tubulin is the major constituent of microtubules, a cylinder consisting of laterally associated linear protofilaments composed of alpha- and beta-tubulin heterodimers. Microtubules grow by the addition of GTP-tubulin dimers to the microtubule end, where a stabilizing cap forms. Below the cap, tubulin dimers are in GDP-bound state, owing to GTPase activity of alpha-tubulin. The protein is Tubulin beta-5 chain of Gossypium hirsutum (Upland cotton).